We begin with the raw amino-acid sequence, 122 residues long: Large ribosomal subunit protein uL14 (122 aa).

The protein belongs to the universal ribosomal protein uL14 family. In terms of assembly, part of the 50S ribosomal subunit. Forms a cluster with proteins L3 and L19. In the 70S ribosome, L14 and L19 interact and together make contacts with the 16S rRNA in bridges B5 and B8.

Its function is as follows. Binds to 23S rRNA. Forms part of two intersubunit bridges in the 70S ribosome. The chain is Large ribosomal subunit protein uL14 from Chloroherpeton thalassium (strain ATCC 35110 / GB-78).